A 108-amino-acid polypeptide reads, in one-letter code: Resistin (108 aa).

Residues 1 to 18 (MKALCLLLLPVLGLLVSS) form the signal peptide. 5 disulfides stabilise this stretch: Cys51-Cys104, Cys63-Cys103, Cys72-Cys89, Cys74-Cys91, and Cys78-Cys93.

The protein belongs to the resistin/FIZZ family. In terms of assembly, homodimer; disulfide-linked. Interacts with DEFA1. As to expression, expressed in white adipose tissue (at protein level). Widely expressed, with particularly strong expression in lung, bone marrow, breast and peripheral blood. Expressed strongly in bone marrow and at lower levels in lung, but not detected in other tissues. Isoform 2 is detected in adipose tissue, bone marrow, brain, lung, peripheral blood, placenta and thymus.

The protein localises to the secreted. In terms of biological role, hormone that seems to suppress insulin ability to stimulate glucose uptake into adipose cells. Potentially links obesity to diabetes. Promotes chemotaxis in myeloid cells. In Homo sapiens (Human), this protein is Resistin (RETN).